The chain runs to 688 residues: Eukaryotic translation initiation factor 3 subunit B (688 aa).

Positions 1 to 28 (MAKKKGDQYDSDGAEDQDYDEEPVFEDP) are disordered. Positions 9–25 (YDSDGAEDQDYDEEPVF) are enriched in acidic residues. An RRM domain is found at 57–141 (NVIVVDNIPV…HTLLVNLFSD (85 aa)). 6 WD repeats span residues 208 to 246 (RERFTETYVKWSPLGTYIVTFHKQGVVIWGGSSFTKINK), 247 to 287 (FAHS…EKRS), 291 to 329 (DGSSNMSMFRWSHDDKYVARMGDNAIHVYETNTFYLLDK), 332 to 367 (IKVQGIRNFSWSPTDNIIAYWMSEDIDAPARVTLLE), 440 to 482 (EVKE…EPTM), and 527 to 572 (GDHY…KRVN). Positions 612–643 (DRVRMTRASKELLEKRAKLREQFVEYRAKRVN) form a coiled coil.

This sequence belongs to the eIF-3 subunit B family. Component of the eukaryotic translation initiation factor 3 (eIF-3) complex.

Its subcellular location is the cytoplasm. Its function is as follows. RNA-binding component of the eukaryotic translation initiation factor 3 (eIF-3) complex, which is involved in protein synthesis of a specialized repertoire of mRNAs and, together with other initiation factors, stimulates binding of mRNA and methionyl-tRNAi to the 40S ribosome. The eIF-3 complex specifically targets and initiates translation of a subset of mRNAs involved in cell proliferation. This Culex quinquefasciatus (Southern house mosquito) protein is Eukaryotic translation initiation factor 3 subunit B.